The primary structure comprises 122 residues: Large ribosomal subunit protein uL14 (122 aa).

This sequence belongs to the universal ribosomal protein uL14 family. Part of the 50S ribosomal subunit. Forms a cluster with proteins L3 and L19. In the 70S ribosome, L14 and L19 interact and together make contacts with the 16S rRNA in bridges B5 and B8.

Functionally, binds to 23S rRNA. Forms part of two intersubunit bridges in the 70S ribosome. In Chloroflexus aurantiacus (strain ATCC 29366 / DSM 635 / J-10-fl), this protein is Large ribosomal subunit protein uL14.